An 837-amino-acid chain; its full sequence is E3 ubiquitin-protein ligase bre-1 (837 aa).

Residues 1–33 form a disordered region; that stretch reads MMKRSNEGIGGENYASSPSDDGQQKRRKIQFEP. Residues 1 to 313 form an interaction with ubc-1 region; the sequence is MMKRSNEGIG…AKEIENLRLE (313 aa). Coiled-coil stretches lie at residues 54-89 and 185-253; these read TSKL…ESNF and HKEL…KHMR. The tract at residues 269 to 302 is disordered; it reads GQSGGNGGATPSSSGTTNATEKKISAPDIPPSET. Residues 277–287 show a composition bias toward polar residues; sequence ATPSSSGTTNA. Coiled coils occupy residues 300–397, 458–651, and 677–763; these read SETA…AFRS, DEMK…KAQT, and VQFK…NESV. Residues 785–824 form an RING-type zinc finger; sequence CPSCKTRPKDCIMLKCYHLFCETCIKTMYDTRQRKCPKCN.

Belongs to the BRE1 family. As to quaternary structure, interacts with ubc-1. Interacts with mrg-1. In adult animals, expressed in oocytes, germ cells, pharyngeal and intestinal cells.

The protein localises to the nucleus. It catalyses the reaction S-ubiquitinyl-[E2 ubiquitin-conjugating enzyme]-L-cysteine + [acceptor protein]-L-lysine = [E2 ubiquitin-conjugating enzyme]-L-cysteine + N(6)-ubiquitinyl-[acceptor protein]-L-lysine.. It functions in the pathway protein modification; protein ubiquitination. Functionally, E3 ubiquitin-protein ligase that mediates monoubiquitination of 'Lys-117' of histone H2B. H2B 'Lys-117' ubiquitination gives a specific tag for epigenetic transcriptional activation and is also prerequisite for histone H3 'Lys-4' and 'Lys-79' methylation. Involved in regulating stem cell proliferative fate. This is E3 ubiquitin-protein ligase bre-1 (rfp-1) from Caenorhabditis elegans.